The primary structure comprises 340 residues: Ketol-acid reductoisomerase (NADP(+)) (340 aa).

The 180-residue stretch at 3 to 182 folds into the KARI N-terminal Rossmann domain; sequence VQMEYEKDVK…GAARVGLLET (180 aa). NADP(+) is bound by residues 26-29, arginine 49, serine 53, and 83-86; these read YGSQ and DEIQ. Histidine 108 is a catalytic residue. Glycine 134 contributes to the NADP(+) binding site. The region spanning 183–328 is the KARI C-terminal knotted domain; sequence TYKEETEEDL…AELRKAMPFV (146 aa). Mg(2+) contacts are provided by aspartate 191, glutamate 195, glutamate 227, and glutamate 231. Serine 252 serves as a coordination point for substrate.

Belongs to the ketol-acid reductoisomerase family. Mg(2+) is required as a cofactor.

It carries out the reaction (2R)-2,3-dihydroxy-3-methylbutanoate + NADP(+) = (2S)-2-acetolactate + NADPH + H(+). The catalysed reaction is (2R,3R)-2,3-dihydroxy-3-methylpentanoate + NADP(+) = (S)-2-ethyl-2-hydroxy-3-oxobutanoate + NADPH + H(+). Its pathway is amino-acid biosynthesis; L-isoleucine biosynthesis; L-isoleucine from 2-oxobutanoate: step 2/4. The protein operates within amino-acid biosynthesis; L-valine biosynthesis; L-valine from pyruvate: step 2/4. Functionally, involved in the biosynthesis of branched-chain amino acids (BCAA). Catalyzes an alkyl-migration followed by a ketol-acid reduction of (S)-2-acetolactate (S2AL) to yield (R)-2,3-dihydroxy-isovalerate. In the isomerase reaction, S2AL is rearranged via a Mg-dependent methyl migration to produce 3-hydroxy-3-methyl-2-ketobutyrate (HMKB). In the reductase reaction, this 2-ketoacid undergoes a metal-dependent reduction by NADPH to yield (R)-2,3-dihydroxy-isovalerate. This Streptococcus gordonii (strain Challis / ATCC 35105 / BCRC 15272 / CH1 / DL1 / V288) protein is Ketol-acid reductoisomerase (NADP(+)).